Reading from the N-terminus, the 416-residue chain is MQLLPFLLYRLRHGSIVLQIMFGLVAGMALALLSPEAAKSVAFLGTLFVKALKGVAPVLVFVLVATSIAGKTKGVQTNMRPVLVLYLVGTFLAALVGVVASFLSPVRLVLANAATGSVPPGGIGEVLHTLLFQVVDNPVNALATGNFIGILAWAAALGVALHHSSDTTKAMLYDLSQSISNVVKVIIRFAPIGVFGLVADAIATTGFSALMGYSHLLAVLLGSMLFIALVVNPLIVFLAIRRNPYPLVWTCLRESGVTAFFTRSSAANIPVNMNLCRKLGLHEDTYSVSIPLGATINMAGAAITISVLSLAAVHTLGVEVDLPTALLLSLVASVAACGASGVAGGSLLLIPLACSLFGISNDVAMQMVAVGFIIGVIQDSAETALNSSTDVLFTAAACIANGDVDVPAGELVKTDA.

A run of 9 helical transmembrane segments spans residues 14–34 (GSIVLQIMFGLVAGMALALLS), 43–63 (FLGTLFVKALKGVAPVLVFVL), 82–102 (VLVLYLVGTFLAALVGVVASF), 141–161 (ALATGNFIGILAWAAALGVAL), 192–212 (IGVFGLVADAIATTGFSALMG), 220–240 (LLGSMLFIALVVNPLIVFLAI), 298–318 (MAGAAITISVLSLAAVHTLGV), 339–359 (ASGVAGGSLLLIPLACSLFGI), and 363–383 (VAMQMVAVGFIIGVIQDSAET).

Belongs to the dicarboxylate/amino acid:cation symporter (DAACS) (TC 2.A.23) family.

The protein resides in the cell inner membrane. It catalyses the reaction L-serine(in) + Na(+)(in) = L-serine(out) + Na(+)(out). The catalysed reaction is L-threonine(in) + Na(+)(in) = L-threonine(out) + Na(+)(out). Involved in the import of serine and threonine into the cell, with the concomitant import of sodium (symport system). The sequence is that of Serine/threonine transporter SstT from Laribacter hongkongensis (strain HLHK9).